The chain runs to 1173 residues: Paired amphipathic helix protein Sin3-like 6 (1173 aa).

The interval 40 to 75 (NQSAGESGRRLKMKRAREDVHTDTQKRKPEVSSRGE) is disordered. Over residues 55–75 (AREDVHTDTQKRKPEVSSRGE) the composition is skewed to basic and acidic residues. PAH domains lie at 79 to 148 (LPRT…LPKG) and 162 to 232 (IRVD…LPNC). Disordered regions lie at residues 236–337 (APST…TTKY), 655–697 (TASG…TAQP), and 740–813 (KHEL…ENNK). 2 stretches are compositionally biased toward basic and acidic residues: residues 264 to 276 (CKLE…SDQR) and 301 to 319 (RDYE…RTEK). Over residues 320-337 (SAASGSQDIGNHKSTTKY) the composition is skewed to polar residues. The span at 750–765 (PTASREQSNFEVNGQN) shows a compositional bias: polar residues. Over residues 778–810 (RSNKDKQSCDKKGAKNKTRAEDDKQENCHKLSE) the composition is skewed to basic and acidic residues.

It is found in the nucleus. Acts as a transcriptional repressor. Plays roles in regulating gene expression and genome stability. The chain is Paired amphipathic helix protein Sin3-like 6 (SNL6) from Arabidopsis thaliana (Mouse-ear cress).